Consider the following 157-residue polypeptide: 2-C-methyl-D-erythritol 2,4-cyclodiphosphate synthase (157 aa).

2 residues coordinate a divalent metal cation: aspartate 9 and histidine 11. 4-CDP-2-C-methyl-D-erythritol 2-phosphate contacts are provided by residues aspartate 9–histidine 11 and histidine 35–serine 36. Histidine 43 lines the a divalent metal cation pocket. 4-CDP-2-C-methyl-D-erythritol 2-phosphate contacts are provided by residues aspartate 57 to glycine 59, phenylalanine 62 to aspartate 66, alanine 101 to alanine 107, threonine 133 to glutamate 136, phenylalanine 140, and arginine 143.

It belongs to the IspF family. As to quaternary structure, homotrimer. A divalent metal cation is required as a cofactor.

The enzyme catalyses 4-CDP-2-C-methyl-D-erythritol 2-phosphate = 2-C-methyl-D-erythritol 2,4-cyclic diphosphate + CMP. It participates in isoprenoid biosynthesis; isopentenyl diphosphate biosynthesis via DXP pathway; isopentenyl diphosphate from 1-deoxy-D-xylulose 5-phosphate: step 4/6. Functionally, involved in the biosynthesis of isopentenyl diphosphate (IPP) and dimethylallyl diphosphate (DMAPP), two major building blocks of isoprenoid compounds. Catalyzes the conversion of 4-diphosphocytidyl-2-C-methyl-D-erythritol 2-phosphate (CDP-ME2P) to 2-C-methyl-D-erythritol 2,4-cyclodiphosphate (ME-CPP) with a corresponding release of cytidine 5-monophosphate (CMP). The polypeptide is 2-C-methyl-D-erythritol 2,4-cyclodiphosphate synthase (Listeria monocytogenes serotype 4a (strain HCC23)).